The following is a 65-amino-acid chain: DNA-directed RNA polymerase subunit Rpo10 (65 aa).

4 residues coordinate Zn(2+): Cys7, Cys10, Cys44, and Cys45.

The protein belongs to the archaeal Rpo10/eukaryotic RPB10 RNA polymerase subunit family. Part of the RNA polymerase complex. It depends on Zn(2+) as a cofactor.

Its subcellular location is the cytoplasm. The protein localises to the chromosome. It carries out the reaction RNA(n) + a ribonucleoside 5'-triphosphate = RNA(n+1) + diphosphate. In terms of biological role, DNA-dependent RNA polymerase (RNAP) catalyzes the transcription of DNA into RNA using the four ribonucleoside triphosphates as substrates. The protein is DNA-directed RNA polymerase subunit Rpo10 of Thermococcus kodakarensis (strain ATCC BAA-918 / JCM 12380 / KOD1) (Pyrococcus kodakaraensis (strain KOD1)).